The following is a 311-amino-acid chain: Regulator of rDNA transcription protein 6 (311 aa).

2 helical membrane-spanning segments follow: residues Pro32–Leu52 and Tyr271–Thr291.

It is found in the membrane. Its function is as follows. May be involved in the modulation of rDNA transcription. The chain is Regulator of rDNA transcription protein 6 (RRT6) from Saccharomyces cerevisiae (strain ATCC 204508 / S288c) (Baker's yeast).